The primary structure comprises 1063 residues: Structural polyprotein (1063 aa).

The segment at 1–131 (MASTTPITME…LGPPTNPFQA (131 aa)) is disordered. Residues 30–69 (GASQSRRPRPPRQRDSSTSGDDSGRDSGGPRRRRGNRGRG) are human C1QBP/SF2P32-binding. Phosphoserine; by host is present on serine 46. A compositionally biased stretch (basic residues) spans 59–69 (PRRRRGNRGRG). Positions 93 to 107 (APKPSRAPPQQPQPP) are enriched in pro residues. A disulfide bond links cysteine 153 and cysteine 197. The segment at 279–300 (GAPQAFLAGLLLAAVAVGTARA) is functions as E2 signal peptide. Topologically, residues 301-534 (GLQPRADMAA…LWLATANALS (234 aa)) are extracellular. Residues 305–347 (RADMAAPPAPPQPPCAHGQHYGHHHHQLPFLGHDGHHGGTLRV) are disordered. Asparagine 353, asparagine 371, asparagine 410, and asparagine 429 each carry an N-linked (GlcNAc...) asparagine; by host glycan. The chain crosses the membrane as a helical span at residues 535–555 (LDHALAAFVLLFPWVLIFMVC). Residues 556–582 (RRACRRRGAAAALTAVVLQGYNPPAYG) are Cytoplasmic-facing. Residues 563–582 (GAAAALTAVVLQGYNPPAYG) form a functions as E1 signal peptide region. Topologically, residues 583–1028 (EEAFTYLCTA…QTWAEWAAAH (446 aa)) are extracellular. 8 disulfides stabilise this stretch: cysteine 590–cysteine 595, cysteine 619–cysteine 824, cysteine 641–cysteine 653, cysteine 699–cysteine 712, cysteine 758–cysteine 767, cysteine 807–cysteine 817, cysteine 931–cysteine 934, and cysteine 950–cysteine 983. N-linked (GlcNAc...) asparagine; by host glycosylation occurs at asparagine 658. Residues asparagine 670 and alanine 671 each coordinate Ca(2+). Positions 718 and 719 each coordinate Ca(2+). Asparagine 759 and asparagine 791 each carry an N-linked (GlcNAc...) asparagine; by host glycan. Threonine 1011 and threonine 1012 each carry an O-linked (GalNAc...) threonine; by host glycan. Residues 1029–1049 (WWQLTLGAVCALLLAGLLACC) traverse the membrane as a helical segment. Topologically, residues 1050–1063 (AKCLYYLRGAIAPR) are extracellular.

In terms of assembly, homodimer; further assembles into homooligomer. Interacts with human C1QBP. Interacts (via N-terminus) with protease/methyltransferase p150. Heterodimer with spike glycoprotein E2. As to quaternary structure, heterodimer with spike glycoprotein E1. Post-translationally, structural polyprotein: Specific enzymatic cleavages in vivo yield mature proteins. Two signal peptidase-mediated cleavages within the polyprotein produce the structural proteins capsid, E2, and E1. The E2 signal peptide remains attached to the C-terminus of the capsid protein after cleavage by the signal peptidase. Another signal peptide at E2 C-terminus directs E1 to the ER, with a similar mechanism. In terms of processing, contains three N-linked oligosaccharides. Capsid is phosphorylated on Ser-46 by host. This phosphorylation negatively regulates capsid protein RNA-binding activity. Dephosphorylated by human PP1A.

The protein resides in the virion. It is found in the host cytoplasm. Its subcellular location is the host mitochondrion. It localises to the virion membrane. The protein localises to the host Golgi apparatus membrane. Capsid protein interacts with genomic RNA and assembles into icosahedric core particles 65-70 nm in diameter. The resulting nucleocapsid eventually associates with the cytoplasmic domain of E2 at the cell membrane, leading to budding and formation of mature virions from host Golgi membranes. Phosphorylation negatively regulates RNA-binding activity, possibly delaying virion assembly during the viral replication phase. Capsid protein dimerizes and becomes disulfide-linked in the virion. Modulates genomic RNA replication. Modulates subgenomic RNA synthesis by interacting with human C1QBP/SF2P32. Induces both perinuclear clustering of mitochondria and the formation of electron-dense intermitochondrial plaques, both hallmarks of rubella virus infected cells. Induces apoptosis when expressed in transfected cells. Its function is as follows. Responsible for viral attachment to target host cell, by binding to the cell receptor. Its transport to the plasma membrane depends on interaction with E1 protein. The surface glycoproteins display an irregular helical organization and a pseudo-tetrameric inner nucleocapsid arrangement. Functionally, class II viral fusion protein. Fusion activity is inactive as long as E1 is bound to E2 in mature virion. After virus attachment to target cell and clathrin-mediated endocytosis, acidification of the endosome would induce dissociation of E1/E2 heterodimer and concomitant trimerization of the E1 subunits. This E1 homotrimer is fusion active, and promotes release of viral nucleocapsid in cytoplasm after endosome and viral membrane fusion. The cytoplasmic tail of spike glycoprotein E1 modulates virus release. The surface glycoproteins display an irregular helical organization and a pseudo-tetrameric inner nucleocapsid arrangement. The protein is Structural polyprotein of Rubella virus (strain RN-UK86) (RUBV).